Reading from the N-terminus, the 259-residue chain is UPF0246 protein PLES_14941 (259 aa).

It belongs to the UPF0246 family.

This Pseudomonas aeruginosa (strain LESB58) protein is UPF0246 protein PLES_14941.